An 87-amino-acid chain; its full sequence is Kappa 1b-bungarotoxin (87 aa).

The first 21 residues, 1–21, serve as a signal peptide directing secretion; it reads MKTLLLTLVVVTIVCLDLGYT. 5 disulfide bridges follow: Cys24/Cys42, Cys35/Cys63, Cys48/Cys52, Cys67/Cys79, and Cys80/Cys85.

It belongs to the three-finger toxin family. Long-chain subfamily. Kappa-neurotoxin sub-subfamily. Homo- and heterodimer; non-covalently linked. As to expression, expressed by the venom gland.

Its subcellular location is the secreted. Its function is as follows. Postsynaptic neurotoxin that binds and inhibits neuronal nicotinic acetylcholine receptors (nAChR) with high affinity (IC(50)&lt;100 nM). Is a selective, and slowly reversible antagonist of alpha-3/CHRNA3-containing and some alpha-4/CHRNA4-containing AChRs. This chain is Kappa 1b-bungarotoxin, found in Bungarus candidus (Malayan krait).